The following is a 199-amino-acid chain: 7-methyl-GTP pyrophosphatase (199 aa).

The Proton acceptor role is filled by D76.

Belongs to the Maf family. YceF subfamily. A divalent metal cation is required as a cofactor.

It localises to the cytoplasm. It carries out the reaction N(7)-methyl-GTP + H2O = N(7)-methyl-GMP + diphosphate + H(+). Functionally, nucleoside triphosphate pyrophosphatase that hydrolyzes 7-methyl-GTP (m(7)GTP). May have a dual role in cell division arrest and in preventing the incorporation of modified nucleotides into cellular nucleic acids. This is 7-methyl-GTP pyrophosphatase from Rhizobium etli (strain ATCC 51251 / DSM 11541 / JCM 21823 / NBRC 15573 / CFN 42).